We begin with the raw amino-acid sequence, 335 residues long: Oligopeptide transport ATP-binding protein OppD (335 aa).

The ABC transporter domain maps to Leu18 to Leu267. ATP is bound at residue Gly54–Ser61.

This sequence belongs to the ABC transporter superfamily. As to quaternary structure, the complex is composed of two ATP-binding proteins (OppD and OppF), two transmembrane proteins (OppB and OppC) and a solute-binding protein (OppA).

It is found in the cell inner membrane. The catalysed reaction is a [peptide](out) + ATP + H2O = a [peptide](in) + ADP + phosphate + H(+). It catalyses the reaction L-alanyl-gamma-D-glutamyl-meso-2,6-diaminopimelate(out) + ATP + H2O = L-alanyl-gamma-D-glutamyl-meso-2,6-diaminopimelate(in) + ADP + phosphate + H(+). Part of the ABC transporter complex OppABCDF involved in the uptake of oligopeptides, including the cell wall murein tripeptide L-alanyl-gamma-D-glutamyl-meso-diaminopimelate. Responsible for energy coupling to the transport system. Plays an important nutritional role and is involved in the recycling of cell wall peptides. Binds ATP. The polypeptide is Oligopeptide transport ATP-binding protein OppD (Salmonella typhimurium (strain LT2 / SGSC1412 / ATCC 700720)).